Here is a 671-residue protein sequence, read N- to C-terminus: E3 ubiquitin-protein ligase pub2 (671 aa).

In terms of domain architecture, C2 spans 1–112 (MENIRFEVQL…KDDYKTRITL (112 aa)). Residues 242 to 275 (GPLPAGWEMRLSEDYHVYFVDHSTKTTTWSDPRD) enclose the WW domain. The HECT domain occupies 338–671 (SVSDMKKKLL…IQETAGFGTE (334 aa)). Cysteine 639 serves as the catalytic Glycyl thioester intermediate.

In terms of assembly, interacts with the E2 ubiquitin-conjugating enzyme ubc4.

It is found in the membrane. The protein resides in the cytoplasm. It catalyses the reaction S-ubiquitinyl-[E2 ubiquitin-conjugating enzyme]-L-cysteine + [acceptor protein]-L-lysine = [E2 ubiquitin-conjugating enzyme]-L-cysteine + N(6)-ubiquitinyl-[acceptor protein]-L-lysine.. It functions in the pathway protein modification; protein ubiquitination. E3 ubiquitin-protein ligase which accepts ubiquitin from an E2 ubiquitin-conjugating enzyme in the form of a thioester and then directly transfers the ubiquitin to targeted substrates. The polypeptide is E3 ubiquitin-protein ligase pub2 (pub2) (Schizosaccharomyces pombe (strain 972 / ATCC 24843) (Fission yeast)).